A 63-amino-acid chain; its full sequence is Large ribosomal subunit protein uL30 (63 aa).

It belongs to the universal ribosomal protein uL30 family. As to quaternary structure, part of the 50S ribosomal subunit.

This Xylella fastidiosa (strain M23) protein is Large ribosomal subunit protein uL30.